Consider the following 192-residue polypeptide: Transcription antitermination protein NusB (192 aa).

The protein belongs to the NusB family.

Involved in transcription antitermination. Required for transcription of ribosomal RNA (rRNA) genes. Binds specifically to the boxA antiterminator sequence of the ribosomal RNA (rrn) operons. The chain is Transcription antitermination protein NusB from Lactococcus lactis subsp. lactis (strain IL1403) (Streptococcus lactis).